The chain runs to 453 residues: Aldehyde dehydrogenase, dimeric NADP-preferring (453 aa).

Ser2 bears the N-acetylserine mark. Lys178 is subject to N6-acetyllysine. 188–193 (GSTAVG) lines the NAD(+) pocket. N6-acetyllysine is present on Lys194. Residues Glu210 and Cys244 contribute to the active site.

Belongs to the aldehyde dehydrogenase family. In terms of assembly, homodimer.

The protein localises to the cytoplasm. It catalyses the reaction an aldehyde + NAD(+) + H2O = a carboxylate + NADH + 2 H(+). It carries out the reaction octanal + NAD(+) + H2O = octanoate + NADH + 2 H(+). Functionally, ALDHs play a major role in the detoxification of alcohol-derived acetaldehyde. They are involved in the metabolism of corticosteroids, biogenic amines, neurotransmitters, and lipid peroxidation. Oxidizes medium and long chain aldehydes into non-toxic fatty acids. Preferentially oxidizes aromatic aldehyde substrates. Comprises about 50 percent of corneal epithelial soluble proteins. May play a role in preventing corneal damage caused by ultraviolet light. In Rattus norvegicus (Rat), this protein is Aldehyde dehydrogenase, dimeric NADP-preferring (Aldh3a1).